The following is a 184-amino-acid chain: ATP-dependent protease subunit HslV (184 aa).

T12 is an active-site residue. A166, C169, and T172 together coordinate Na(+).

This sequence belongs to the peptidase T1B family. HslV subfamily. As to quaternary structure, a double ring-shaped homohexamer of HslV is capped on each side by a ring-shaped HslU homohexamer. The assembly of the HslU/HslV complex is dependent on binding of ATP.

The protein localises to the cytoplasm. The catalysed reaction is ATP-dependent cleavage of peptide bonds with broad specificity.. Its activity is regulated as follows. Allosterically activated by HslU binding. Functionally, protease subunit of a proteasome-like degradation complex believed to be a general protein degrading machinery. The protein is ATP-dependent protease subunit HslV of Brucella melitensis biotype 1 (strain ATCC 23456 / CCUG 17765 / NCTC 10094 / 16M).